The sequence spans 443 residues: Methylenetetrahydrofolate--tRNA-(uracil-5-)-methyltransferase TrmFO (443 aa).

8–13 lines the FAD pocket; that stretch reads GAGLAG.

It belongs to the MnmG family. TrmFO subfamily. FAD is required as a cofactor.

It is found in the cytoplasm. It catalyses the reaction uridine(54) in tRNA + (6R)-5,10-methylene-5,6,7,8-tetrahydrofolate + NADH + H(+) = 5-methyluridine(54) in tRNA + (6S)-5,6,7,8-tetrahydrofolate + NAD(+). The catalysed reaction is uridine(54) in tRNA + (6R)-5,10-methylene-5,6,7,8-tetrahydrofolate + NADPH + H(+) = 5-methyluridine(54) in tRNA + (6S)-5,6,7,8-tetrahydrofolate + NADP(+). Functionally, catalyzes the folate-dependent formation of 5-methyl-uridine at position 54 (M-5-U54) in all tRNAs. The sequence is that of Methylenetetrahydrofolate--tRNA-(uracil-5-)-methyltransferase TrmFO from Thermus thermophilus (strain ATCC BAA-163 / DSM 7039 / HB27).